A 217-amino-acid chain; its full sequence is Large ribosomal subunit protein uL3 (217 aa).

A disordered region spans residues 127–162 (GFSRGPMSHGSKNHRAPGSTGAGTTPGRIYPGKRMA). Residues 142 to 153 (APGSTGAGTTPG) are compositionally biased toward low complexity.

This sequence belongs to the universal ribosomal protein uL3 family. Part of the 50S ribosomal subunit. Forms a cluster with proteins L14 and L19.

One of the primary rRNA binding proteins, it binds directly near the 3'-end of the 23S rRNA, where it nucleates assembly of the 50S subunit. In Prochlorococcus marinus (strain MIT 9301), this protein is Large ribosomal subunit protein uL3.